Consider the following 343-residue polypeptide: Biotin synthase (343 aa).

In terms of domain architecture, Radical SAM core spans 36–254 (NTIQISTLLS…IAVARIMMPK (219 aa)). [4Fe-4S] cluster contacts are provided by C51, C55, and C58. Residues C95, C126, C186, and R258 each contribute to the [2Fe-2S] cluster site.

This sequence belongs to the radical SAM superfamily. Biotin synthase family. Homodimer. Requires [4Fe-4S] cluster as cofactor. [2Fe-2S] cluster serves as cofactor.

It carries out the reaction (4R,5S)-dethiobiotin + (sulfur carrier)-SH + 2 reduced [2Fe-2S]-[ferredoxin] + 2 S-adenosyl-L-methionine = (sulfur carrier)-H + biotin + 2 5'-deoxyadenosine + 2 L-methionine + 2 oxidized [2Fe-2S]-[ferredoxin]. It participates in cofactor biosynthesis; biotin biosynthesis; biotin from 7,8-diaminononanoate: step 2/2. In terms of biological role, catalyzes the conversion of dethiobiotin (DTB) to biotin by the insertion of a sulfur atom into dethiobiotin via a radical-based mechanism. The protein is Biotin synthase of Buchnera aphidicola subsp. Acyrthosiphon pisum (strain APS) (Acyrthosiphon pisum symbiotic bacterium).